The following is a 68-amino-acid chain: KCNQ1 downstream neighbor protein (68 aa).

The interval 28–68 is disordered; it reads GVASGCSPSKASQEARGKEKCPTLNGQPQWSALFTLPPQRE.

As to expression, shows reduced expression in Wilms' tumor samples.

This chain is KCNQ1 downstream neighbor protein (KCNQ1DN), found in Homo sapiens (Human).